The following is a 638-amino-acid chain: 1-deoxy-D-xylulose-5-phosphate synthase (638 aa).

Thiamine diphosphate-binding positions include H71 and S112–A114. Residue D144 participates in Mg(2+) binding. Thiamine diphosphate-binding positions include G145–A146, N173, Y284, and E365. N173 provides a ligand contact to Mg(2+).

Belongs to the transketolase family. DXPS subfamily. In terms of assembly, homodimer. The cofactor is Mg(2+). Thiamine diphosphate is required as a cofactor.

It catalyses the reaction D-glyceraldehyde 3-phosphate + pyruvate + H(+) = 1-deoxy-D-xylulose 5-phosphate + CO2. Its pathway is metabolic intermediate biosynthesis; 1-deoxy-D-xylulose 5-phosphate biosynthesis; 1-deoxy-D-xylulose 5-phosphate from D-glyceraldehyde 3-phosphate and pyruvate: step 1/1. In terms of biological role, catalyzes the acyloin condensation reaction between C atoms 2 and 3 of pyruvate and glyceraldehyde 3-phosphate to yield 1-deoxy-D-xylulose-5-phosphate (DXP). The polypeptide is 1-deoxy-D-xylulose-5-phosphate synthase (Mycobacterium bovis (strain ATCC BAA-935 / AF2122/97)).